Consider the following 2104-residue polypeptide: Protein Ycf2 (2104 aa).

Position 1396–1403 (Gly1396–Ser1403) interacts with ATP.

Belongs to the Ycf2 family.

The protein resides in the plastid. It is found in the chloroplast stroma. In terms of biological role, probable ATPase of unknown function. Its presence in a non-photosynthetic plant (Epifagus virginiana) and experiments in tobacco indicate that it has an essential function which is probably not related to photosynthesis. The sequence is that of Protein Ycf2 (ycf2-A) from Adiantum capillus-veneris (Maidenhair fern).